The following is a 402-amino-acid chain: Cysteine desulfurase NifS (402 aa).

Pyridoxal 5'-phosphate contacts are provided by residues 72-73, asparagine 151, glutamine 179, and 199-201; these read GT and CGH. Position 202 is an N6-(pyridoxal phosphate)lysine (lysine 202). Threonine 237 provides a ligand contact to pyridoxal 5'-phosphate. Cysteine 325 serves as the catalytic Cysteine persulfide intermediate. Cysteine 325 contacts [2Fe-2S] cluster.

Belongs to the class-V pyridoxal-phosphate-dependent aminotransferase family. NifS/IscS subfamily. In terms of assembly, homodimer. The cofactor is pyridoxal 5'-phosphate.

It carries out the reaction (sulfur carrier)-H + L-cysteine = (sulfur carrier)-SH + L-alanine. Its activity is regulated as follows. Inhibited by equimolar concentrations of p-chloromercuribenzoic acid, iodoacetamide or N-ethylmaleimide. Catalyzes the removal of elemental sulfur atoms from cysteine to produce alanine. Seems to participate in the biosynthesis of the nitrogenase metalloclusters by providing the inorganic sulfur required for the Fe-S core formation. This chain is Cysteine desulfurase NifS, found in Azotobacter vinelandii.